A 660-amino-acid polypeptide reads, in one-letter code: Poly [ADP-ribose] polymerase 2-A (660 aa).

The SAP 1 domain maps to S2–I36. A disordered region spans residues E40–E92. Positions K69 to R75 match the Nuclear localization signal motif. The region spanning L91–P125 is the SAP 2 domain. In terms of domain architecture, WGR spans T179–Y281. A PARP alpha-helical domain is found at E308–E426. A PARP catalytic domain is found at D434–R660.

The protein belongs to the ARTD/PARP family.

The protein localises to the nucleus. The enzyme catalyses NAD(+) + (ADP-D-ribosyl)n-acceptor = nicotinamide + (ADP-D-ribosyl)n+1-acceptor + H(+).. It catalyses the reaction L-aspartyl-[protein] + NAD(+) = 4-O-(ADP-D-ribosyl)-L-aspartyl-[protein] + nicotinamide. The catalysed reaction is L-glutamyl-[protein] + NAD(+) = 5-O-(ADP-D-ribosyl)-L-glutamyl-[protein] + nicotinamide. Involved in the base excision repair (BER) pathway, by catalyzing the poly(ADP-ribosyl)ation of a limited number of acceptor proteins involved in chromatin architecture and in DNA metabolism. This modification follows DNA damages and appears as an obligatory step in a detection/signaling pathway leading to the reparation of DNA strand breaks. In Oryza sativa subsp. japonica (Rice), this protein is Poly [ADP-ribose] polymerase 2-A (PARP2-A).